The following is a 317-amino-acid chain: Protoheme IX farnesyltransferase (317 aa).

6 helical membrane passes run 25-45 (FFAL…LVGM), 54-74 (PVIG…SGCL), 117-137 (LMLG…TIVF), 167-189 (IGQA…IIFI), 244-264 (LGFG…AMLV), and 281-301 (AAMS…SALL).

It belongs to the UbiA prenyltransferase family. Protoheme IX farnesyltransferase subfamily.

It localises to the cell inner membrane. The enzyme catalyses heme b + (2E,6E)-farnesyl diphosphate + H2O = Fe(II)-heme o + diphosphate. Its pathway is porphyrin-containing compound metabolism; heme O biosynthesis; heme O from protoheme: step 1/1. In terms of biological role, converts heme B (protoheme IX) to heme O by substitution of the vinyl group on carbon 2 of heme B porphyrin ring with a hydroxyethyl farnesyl side group. The chain is Protoheme IX farnesyltransferase from Methylobacterium nodulans (strain LMG 21967 / CNCM I-2342 / ORS 2060).